A 110-amino-acid polypeptide reads, in one-letter code: Cell cycle protein GpsB (110 aa).

A coiled-coil region spans residues 37–63 (KDYTVYIALVKELQEENAKLKAKATSA). The tract at residues 59–79 (KATSAPASRPAYASATSEPSH) is disordered. Positions 60-75 (ATSAPASRPAYASATS) are enriched in low complexity.

Belongs to the GpsB family. In terms of assembly, forms polymers through the coiled coil domains. Interacts with PBP1, MreC and EzrA.

The protein localises to the cytoplasm. Functionally, divisome component that associates with the complex late in its assembly, after the Z-ring is formed, and is dependent on DivIC and PBP2B for its recruitment to the divisome. Together with EzrA, is a key component of the system that regulates PBP1 localization during cell cycle progression. Its main role could be the removal of PBP1 from the cell pole after pole maturation is completed. Also contributes to the recruitment of PBP1 to the division complex. Not essential for septum formation. In Streptococcus thermophilus (strain CNRZ 1066), this protein is Cell cycle protein GpsB.